The following is a 717-amino-acid chain: DNA ligase (717 aa).

Residues 44 to 48 (DADYD), 93 to 94 (SL), and E127 contribute to the NAD(+) site. K129 functions as the N6-AMP-lysine intermediate in the catalytic mechanism. NAD(+) contacts are provided by R150, E186, K302, and K326. Zn(2+)-binding residues include C431, C434, C455, and C461. The BRCT domain occupies 639–717 (STDSPVAGKT…EDEWLALIGG (79 aa)).

This sequence belongs to the NAD-dependent DNA ligase family. LigA subfamily. It depends on Mg(2+) as a cofactor. Mn(2+) serves as cofactor.

It catalyses the reaction NAD(+) + (deoxyribonucleotide)n-3'-hydroxyl + 5'-phospho-(deoxyribonucleotide)m = (deoxyribonucleotide)n+m + AMP + beta-nicotinamide D-nucleotide.. Functionally, DNA ligase that catalyzes the formation of phosphodiester linkages between 5'-phosphoryl and 3'-hydroxyl groups in double-stranded DNA using NAD as a coenzyme and as the energy source for the reaction. It is essential for DNA replication and repair of damaged DNA. This Sinorhizobium fredii (strain NBRC 101917 / NGR234) protein is DNA ligase.